The primary structure comprises 518 residues: NADH-quinone oxidoreductase subunit N (518 aa).

14 helical membrane passes run 18–38, 45–65, 82–102, 113–133, 136–156, 171–191, 220–240, 254–274, 295–315, 328–348, 355–375, 399–419, 439–459, and 486–506; these read FRPEMALTFGTLVLFVLDLVF, VALLTAGALAVLAAAAGLLAI, AFAIFFKWLFLAAGALTVIIA, IGQFFALLMAIVLGMFMMASA, LLMVYLSLELVSMVSYVLAGF, VIYGGVASGVMLFGMSYLYGL, VALVVAIVFVTAGIGYKVAAV, PTPFTAFLSVGPKAAGFALAI, LAGIPWPAVVGVIAAVTMTLG, LLAYSSIAHAGYTLMGLSAVS, VMIYMLVYLVMNVGAFLVVIL, AVAFAIFLFSLTGLPPFAGFV, WYAWLALIGALNTAIALYYYV, and VMLGAFSVAILVFGIWWTPMV.

The protein belongs to the complex I subunit 2 family. As to quaternary structure, NDH-1 is composed of 14 different subunits. Subunits NuoA, H, J, K, L, M, N constitute the membrane sector of the complex.

The protein resides in the cell inner membrane. It catalyses the reaction a quinone + NADH + 5 H(+)(in) = a quinol + NAD(+) + 4 H(+)(out). In terms of biological role, NDH-1 shuttles electrons from NADH, via FMN and iron-sulfur (Fe-S) centers, to quinones in the respiratory chain. The immediate electron acceptor for the enzyme in this species is believed to be ubiquinone. Couples the redox reaction to proton translocation (for every two electrons transferred, four hydrogen ions are translocated across the cytoplasmic membrane), and thus conserves the redox energy in a proton gradient. This is NADH-quinone oxidoreductase subunit N from Anaeromyxobacter sp. (strain Fw109-5).